Reading from the N-terminus, the 164-residue chain is UPF0304 protein NT01EI_2691 (164 aa).

It belongs to the UPF0304 family.

This is UPF0304 protein NT01EI_2691 from Edwardsiella ictaluri (strain 93-146).